Here is a 432-residue protein sequence, read N- to C-terminus: MLALLTAGVALAVAAGQAQDNPIPGSRFVCTALPPEAARAGCPLPAMPMQGGALSPEEELRAAVLHWRETVVQQKETLGAQREAIRELTSKLARCEGLAGGKARGTGATGKDTMGDLPRDPGHVVEQLSRSLQTLKDRLESLELQLHTNASNAGLPSDFREVLQRRLGELERQLLRKVAELEDEKSLLHNETSAHRQKTENTLNALLQRVTELERGNSAFKSPDAFKVSLPLRTNYLYGKIKKTLPELYAFTICLWLRSSASPGIGTPFSYAVPGQANEIVLIEWGNNPIELLINDKVAQLPLFVSDGKWHHICITWTTRDGMWEAFQDGEKLGTGENLAPWHPIKPGGVLILGQEQDTVGGRFDATQAFVGELSQFNIWDRVLRAQEIINIANCSTNMPGNIIPWVDNNVDVFGGASKWPVETCEERLLDL.

The N-terminal stretch at 1-14 is a signal peptide; it reads MLALLTAGVALAVA. 2 N-linked (GlcNAc...) asparagine glycosylation sites follow: Asn149 and Asn190. Residues 224–425 form the Pentraxin (PTX) domain; sequence DAFKVSLPLR…GASKWPVETC (202 aa). Cys254 and Cys314 form a disulfide bridge. 5 residues coordinate Ca(2+): Asn278, Glu356, Gln357, Asp358, and Gln368. The N-linked (GlcNAc...) asparagine glycan is linked to Asn394.

Homooligomer or heterooligomer (probably pentamer) with neuronal pentraxin receptor (NPTXR). It depends on Ca(2+) as a cofactor.

It localises to the secreted. In terms of biological role, likely to play role in the modification of cellular properties that underlie long-term plasticity. Binds to agar matrix in a calcium-dependent manner. This Rattus norvegicus (Rat) protein is Neuronal pentraxin-2 (Nptx2).